We begin with the raw amino-acid sequence, 260 residues long: MPKRTYAMRYVAGQPVEQIFPGSAKQLGQGLPPGAPLPTTEFLRVMVWNIFKQQRAQWLSVLKEFGRDAQLMLLQEAQTTPELVRFATSHYQAADQVPAFALPQHPSGVMTLAATHPVYCCPLREREPLLRLSKSALITVYPIHDGRLLMVVNIHAVNFSLGVDVYSKQLEPIGEQIAMHRGPVILAGDFNAWSRQRVNALQRFAQGLGLEEVEFSTDNRSRAFGKPLDFVFYRGLTLADASVLVTRASDHNPLLVEFQP.

The protein belongs to the UPF0294 family.

The protein resides in the cytoplasm. The protein is UPF0294 protein YE0917 of Yersinia enterocolitica serotype O:8 / biotype 1B (strain NCTC 13174 / 8081).